Consider the following 493-residue polypeptide: MEFHQIDERNQALLSKIAVDDGHGENSPYFDGWKAYDNDPFHPEDNPLGVIQMGLAENQLSFDMIVDWIRKHPEASICTPKGLERFKSIANFQDYHGLPEFRNGIASFMGKVRGGRVQFDPSRIVMGGGATGASETVIFCLADPGDAFLVPSPYYAAFDRDLKWRTRAQIIRVHCNSSNNFQVTKAALEIAYKKAQEANIKVKGVIITNPSNPLGTTYDRDTLKTLVTFVNQHDIHLICDEIYSATVFKAPTFISIAQIVEEMEHCKKELIHILYSLSKDMGLPGFRVGIIYSYNDVVVRRARQMSSFGLVSSQTQHLLAAMLSDEDFVDKFLAENSKRLAERHARFTKELDKMGITCLNSNAGVFVWMDLRRLLKDQTFKAEMELWRVIINEVKLNVSPGSSFHVTEPGWFRVCFANMDDNTVDVALNRIHSFVENIDKKEDNTVAMPSKTRRRENKLRLSFSFSGRRYDEGNVLNSPHTMSPHSPLVIAKN.

At Lys279 the chain carries N6-(pyridoxal phosphate)lysine.

The protein belongs to the class-I pyridoxal-phosphate-dependent aminotransferase family. In terms of assembly, homodimer. Pyridoxal 5'-phosphate serves as cofactor.

The enzyme catalyses S-adenosyl-L-methionine = 1-aminocyclopropane-1-carboxylate + S-methyl-5'-thioadenosine + H(+). The protein operates within alkene biosynthesis; ethylene biosynthesis via S-adenosyl-L-methionine; ethylene from S-adenosyl-L-methionine: step 1/2. Its function is as follows. Catalyzes the formation of 1-aminocyclopropane-1-carboxylate, a direct precursor of ethylene in higher plants. The polypeptide is 1-aminocyclopropane-1-carboxylate synthase CMW33 (ACS1) (Cucurbita maxima (Pumpkin)).